Here is a 289-residue protein sequence, read N- to C-terminus: Homoserine kinase (289 aa).

Residue 79–89 coordinates ATP; that stretch reads PLARGLGSSSS.

Belongs to the GHMP kinase family. Homoserine kinase subfamily.

Its subcellular location is the cytoplasm. The catalysed reaction is L-homoserine + ATP = O-phospho-L-homoserine + ADP + H(+). It participates in amino-acid biosynthesis; L-threonine biosynthesis; L-threonine from L-aspartate: step 4/5. Catalyzes the ATP-dependent phosphorylation of L-homoserine to L-homoserine phosphate. This chain is Homoserine kinase, found in Streptococcus pneumoniae serotype 2 (strain D39 / NCTC 7466).